Consider the following 90-residue polypeptide: MSSGGLLLLLGLLTLWAELTPISGQDRPKFCNLAPESGRCRGHLRRIYYNPDSNKCEVFFYGGCGGNDNNFETRKKCRQTCGAPRKGRPT.

Residues M1–G24 form the signal peptide. Residue Q25 is modified to Pyrrolidone carboxylic acid. The BPTI/Kunitz inhibitor domain occupies C31 to C81. 3 disulfides stabilise this stretch: C31–C81, C40–C64, and C56–C77. A propeptide spanning residues R85 to T90 is cleaved from the precursor.

This sequence belongs to the venom Kunitz-type family. In terms of tissue distribution, expressed by the venom gland.

It localises to the secreted. Functionally, serine protease inhibitor that inhibits trypsin. This is Kunitz-type serine protease inhibitor C1 from Daboia siamensis (Eastern Russel's viper).